We begin with the raw amino-acid sequence, 275 residues long: Large ribosomal subunit protein uL2 (275 aa).

The segment at 222–275 (GKVMNPVDHPHGGGEGRNPIGRNPSTPWGKLAMGVKTRGNKKSDRLIVKRRNKK) is disordered.

It belongs to the universal ribosomal protein uL2 family. As to quaternary structure, part of the 50S ribosomal subunit. Forms a bridge to the 30S subunit in the 70S ribosome.

One of the primary rRNA binding proteins. Required for association of the 30S and 50S subunits to form the 70S ribosome, for tRNA binding and peptide bond formation. It has been suggested to have peptidyltransferase activity; this is somewhat controversial. Makes several contacts with the 16S rRNA in the 70S ribosome. This chain is Large ribosomal subunit protein uL2, found in Desulforamulus reducens (strain ATCC BAA-1160 / DSM 100696 / MI-1) (Desulfotomaculum reducens).